Consider the following 248-residue polypeptide: MARTFFVGGNFKLNGTKSSIKEIVERLNNAKLDPKVEVVLCPPAPYLDYTVSLVKKSQVSVGAQNAYLKASGAFTGENSVDQIKDVGAKWVILGHSERRQYFREDDQLIAEKTAFALSQGVGVILCIGETLDQKKAGTTLQVVERQLQAVIDKVKDWSNVVIAYEPVWAIGTGLAATPEDAQEIHHSIREFLAKKLGEKTAQETRILYGGSANGKNAVTFKDKPDVDGFLVGGASLKPEFVDIINSRS.

Residues Asn-10 and Lys-12 each coordinate substrate. Catalysis depends on His-95, which acts as the Electrophile. The active-site Proton acceptor is Glu-165.

It belongs to the triosephosphate isomerase family. Homodimer.

It carries out the reaction D-glyceraldehyde 3-phosphate = dihydroxyacetone phosphate. Its pathway is carbohydrate biosynthesis; gluconeogenesis. It participates in carbohydrate degradation; glycolysis; D-glyceraldehyde 3-phosphate from glycerone phosphate: step 1/1. This is Triosephosphate isomerase (TPI1) from Zygosaccharomyces bailii.